The primary structure comprises 119 residues: Large ribosomal subunit protein bL20 (119 aa).

Belongs to the bacterial ribosomal protein bL20 family.

Functionally, binds directly to 23S ribosomal RNA and is necessary for the in vitro assembly process of the 50S ribosomal subunit. It is not involved in the protein synthesizing functions of that subunit. The chain is Large ribosomal subunit protein bL20 from Dehalococcoides mccartyi (strain ATCC BAA-2266 / KCTC 15142 / 195) (Dehalococcoides ethenogenes (strain 195)).